The sequence spans 374 residues: 4-galactosyl-N-acetylglucosaminide 3-alpha-L-fucosyltransferase FUT5 (374 aa).

The Cytoplasmic segment spans residues 1 to 15; the sequence is MDPLGPAKPQWLWRR. Residues 16–34 traverse the membrane as a helical; Signal-anchor for type II membrane protein segment; that stretch reads CLAGLLFQLLVAVCFFSYL. The Lumenal portion of the chain corresponds to 35–374; that stretch reads RVSRDDATGS…TVRSIAAWFT (340 aa). Residues Asn-60, Asn-105, Asn-167, and Asn-198 are each glycosylated (N-linked (GlcNAc...) asparagine).

This sequence belongs to the glycosyltransferase 10 family. Liver, colon and testis and trace amounts in T-cells and brain.

The protein localises to the golgi apparatus. It is found in the golgi stack membrane. It carries out the reaction a beta-D-galactosyl-(1-&gt;3)-N-acetyl-beta-D-glucosaminyl derivative + GDP-beta-L-fucose = a beta-D-galactosyl-(1-&gt;3)-[alpha-L-fucosyl-(1-&gt;4)]-N-acetyl-beta-D-glucosaminyl derivative + GDP + H(+). The enzyme catalyses an N-acetyl-alpha-neuraminyl-(2-&gt;3)-beta-D-galactosyl-(1-&gt;4)-N-acetyl-beta-D-glucosaminyl derivative + GDP-beta-L-fucose = an alpha-Neu5Ac-(2-&gt;3)-beta-D-Gal-(1-&gt;4)-[alpha-L-Fuc-(1-&gt;3)]-beta-D-GlcNAc derivative + GDP + H(+). The catalysed reaction is an alpha-Neu5Ac-(2-&gt;3)-beta-D-Gal-(1-&gt;4)-beta-D-GlcNAc-(1-&gt;3)-beta-D-Gal-(1-&gt;4)-[alpha-L-Fuc-(1-&gt;3)]-beta-D-GlcNAc derivative + GDP-beta-L-fucose = an alpha-Neu5Ac-(2-&gt;3)-beta-D-Gal-(1-&gt;4)-[alpha-L-Fuc-(1-&gt;3)]-beta-D-GlcNAc-(1-&gt;3)-beta-D-Gal-(1-&gt;4)-[alpha-L-Fuc-(1-&gt;3)]-beta-D-GlcNAc derivative + GDP + H(+). It catalyses the reaction a beta-D-galactosyl-(1-&gt;4)-N-acetyl-beta-D-glucosaminyl derivative + GDP-beta-L-fucose = a beta-D-galactosyl-(1-&gt;4)-[alpha-L-fucosyl-(1-&gt;3)]-N-acetyl-beta-D-glucosaminyl derivative + GDP + H(+). It carries out the reaction a neolactoside nLc4Cer + GDP-beta-L-fucose = a neolactoside III(3)-alpha-Fuc-nLc4Cer + GDP + H(+). The enzyme catalyses a neolactoside nLc6Cer + GDP-beta-L-fucose = beta-D-galactosyl-(1-&gt;4)-N-acetyl-beta-D-glucosaminyl-(1-&gt;3)-beta-D-galactosyl-(1-&gt;4)-[alpha-L-fucosyl-(1-&gt;3)]-N-acetyl-beta-D-glucosaminyl-(1-&gt;3)-beta-D-galactosyl-(1-&gt;4)-beta-D-glucosyl-(1&lt;-&gt;1')-ceramide + GDP + H(+). The catalysed reaction is a neolactoside nLc6Cer(d18:1(4E)) + GDP-beta-L-fucose = a neolactoside III(3)-alpha-Fuc-nLc6Cer(d18:1(4E)) + GDP + H(+). It catalyses the reaction a neolactoside nLc4Cer(d18:1(4E)) + GDP-beta-L-fucose = a neolactoside III(3)-alpha-Fuc-nLc4Cer(d18:1(4E)) + GDP + H(+). It carries out the reaction a neolactoside VI(3)-alpha-NeuNAc-nLc6Cer + GDP-beta-L-fucose = a neolactoside VI(3)-alpha-NeuAc,III(3)-alphaFuc-nLc6Cer + GDP + H(+). The enzyme catalyses beta-D-galactosyl-(1-&gt;4)-N-acetyl-D-glucosamine + GDP-beta-L-fucose = beta-D-galactosyl-(1-&gt;4)-[alpha-L-fucosyl-(1-&gt;3)]-N-acetyl-D-glucosamine + GDP + H(+). The catalysed reaction is N-acetyl-alpha-neuraminosyl-(2-&gt;3)-beta-D-galactosyl-(1-&gt;4)-N-acetyl-beta-D-glucosamine + GDP-beta-L-fucose = N-acetyl-alpha-neuraminosyl-(2-&gt;3)-beta-D-galactosyl-(1-&gt;4)-[alpha-L-fucosyl-(1-&gt;3)]-N-acetyl-beta-D-glucosamine + GDP + H(+). It catalyses the reaction alpha-L-Fuc-(1-&gt;2)-beta-D-Gal-(1-&gt;4)-D-GlcNAc + GDP-beta-L-fucose = alpha-L-Fuc-(1-&gt;2)-beta-D-Gal-(1-&gt;4)-[alpha-L-Fuc-(1-&gt;3)]-D-GlcNAc + GDP + H(+). It carries out the reaction an alpha-Neu5Ac-(2-&gt;3)-beta-D-Gal-(1-&gt;3)-D-GlcNAc derivative + GDP-beta-L-fucose = an alpha-Neu5Ac-(2-&gt;3)-beta-D-Gal-(1-&gt;3)-[alpha-L-Fuc-(1-&gt;4)]-beta-D-GlcNAc derivative + GDP + H(+). It participates in protein modification; protein glycosylation. Catalyzes preferentially the transfer of L-fucose, from a guanosine diphosphate-beta-L-fucose, to the N-acetyl-beta-D-glucosamine (GlcNAc) of an N-acetyllactosamine unit (type 2 chain) of an oligosaccharide, or a glycoprotein- and a glycolipid-linked N-acetyllactosamine unit via an alpha (1,3) linkage and participates in the surface expression of VIM-2, Lewis X/SSEA-1 and sialyl Lewis X antigens. Preferentially transfers fucose to the GlcNAc of an internal N-acetyllactosamine unit of a poly-N-acetyllactosamine chain acceptor substrate. Also catalyzes to a lesser extend the transfer of L-fucose to the GlcNAc of a type 1 (beta-D-galactosyl-(1-&gt;3)-N-acetyl-beta-D-glucosaminyl) or H-type 1 (alpha-L-Fuc-(1-&gt;2)-beta-D-Gal-(1-&gt;3)-D-GlcNAc) chain oligosaccharide via an alpha (1,4) linkage. Preferentially catalyzes sialylated type 2 oligosaccharide acceptors over neutral type 2 or H type 2 (alpha-L-Fuc-(1-&gt;2)-beta-D-Gal-(1-&gt;4)-D-GlcNAc) oligosaccharide acceptors. Lactose-based structures are also acceptor substrates. The sequence is that of 4-galactosyl-N-acetylglucosaminide 3-alpha-L-fucosyltransferase FUT5 from Homo sapiens (Human).